Here is a 1534-residue protein sequence, read N- to C-terminus: Dicer-like protein 2 (1534 aa).

The span at 1 to 10 (MDQDPRKDNP) shows a compositional bias: basic and acidic residues. The tract at residues 1–36 (MDQDPRKDNPVEMDVDRDDSSQDPDDNESFKSALDE) is disordered. The span at 11-27 (VEMDVDRDDSSQDPDDN) shows a compositional bias: acidic residues. Residues 65–249 (TPAALTARAY…IEKLEQVLDA (185 aa)) form the Helicase ATP-binding domain. 78–85 (MFEASLKQ) contributes to the ATP binding site. Residues 192 to 195 (DEAH) carry the DEAH box motif. One can recognise a Helicase C-terminal domain in the interval 404–575 (KVQTLLKVLA…NAELELLDDP (172 aa)). Positions 597–700 (ARSHLNHFCA…LPTKVSDFLA (104 aa)) constitute a Dicer dsRNA-binding fold domain. 2 consecutive RNase III domains span residues 959–1107 (MSLV…MCGG) and 1153–1353 (LEPL…VDSG). Mg(2+)-binding residues include E1193, D1339, and E1342. A DRBM domain is found at 1383-1483 (HPNVELQILA…AEKGCLVIKA (101 aa)). Positions 1492–1504 (KAAAKEDKGHNTE) are enriched in basic and acidic residues. The interval 1492–1534 (KAAAKEDKGHNTENGDANADNGQSGEKEEVPDCRDADGDTVMN) is disordered. Polar residues predominate over residues 1505–1515 (NGDANADNGQS). The segment covering 1516-1528 (GEKEEVPDCRDAD) has biased composition (basic and acidic residues).

The protein belongs to the helicase family. Dicer subfamily. Mg(2+) serves as cofactor. It depends on Mn(2+) as a cofactor.

Dicer-like endonuclease involved in cleaving double-stranded RNA in the RNA interference (RNAi) pathway. Produces 21 to 25 bp dsRNAs (siRNAs) which target the selective destruction of homologous RNAs leading to sequence-specific suppression of gene expression, called post-transcriptional gene silencing (PTGS). Part of a broad host defense response against viral infection and transposons. Controls the expression of the non-LTR retrotransposon Tad in the African strain, Adiomopoume. The chain is Dicer-like protein 2 (dcl-2) from Neurospora crassa (strain ATCC 24698 / 74-OR23-1A / CBS 708.71 / DSM 1257 / FGSC 987).